Here is a 189-residue protein sequence, read N- to C-terminus: Fine tangled pili major subunit (189 aa).

This sequence belongs to the Dps family. As to quaternary structure, hexamer.

Its subcellular location is the fimbrium. Its function is as follows. May contribute to bacterial adherence, or be involved in the protection of the bacteria, or both. The polypeptide is Fine tangled pili major subunit (ftpA) (Haemophilus ducreyi (strain 35000HP / ATCC 700724)).